Here is a 387-residue protein sequence, read N- to C-terminus: Phosphoglycerate kinase (387 aa).

Residues 21-23 (DLN), R36, 59-62 (HLGR), R113, and R146 each bind substrate. ATP-binding positions include K197, E314, and 340-343 (GGDT).

It belongs to the phosphoglycerate kinase family. Monomer.

Its subcellular location is the cytoplasm. It carries out the reaction (2R)-3-phosphoglycerate + ATP = (2R)-3-phospho-glyceroyl phosphate + ADP. It participates in carbohydrate degradation; glycolysis; pyruvate from D-glyceraldehyde 3-phosphate: step 2/5. The protein is Phosphoglycerate kinase of Aeromonas salmonicida (strain A449).